A 235-amino-acid polypeptide reads, in one-letter code: Orotidine 5'-phosphate decarboxylase (235 aa).

Substrate-binding positions include aspartate 17, lysine 39, 66–75 (DLKLHDIGNT), threonine 121, arginine 182, glutamine 191, glycine 211, and arginine 212. Lysine 68 (proton donor) is an active-site residue.

The protein belongs to the OMP decarboxylase family. Type 1 subfamily. Homodimer.

The enzyme catalyses orotidine 5'-phosphate + H(+) = UMP + CO2. The protein operates within pyrimidine metabolism; UMP biosynthesis via de novo pathway; UMP from orotate: step 2/2. In terms of biological role, catalyzes the decarboxylation of orotidine 5'-monophosphate (OMP) to uridine 5'-monophosphate (UMP). The chain is Orotidine 5'-phosphate decarboxylase from Rhodopseudomonas palustris (strain HaA2).